A 1527-amino-acid polypeptide reads, in one-letter code: MDALCGSGELGSKFWDSNLSVHTENPDLTPCFQNSLLAWVPCIYLWVALPCYLLYLRHHCRGYIILSHLSKLKMVLGVLLWCVSWADLFYSFHGLVHGRAPAPVFFVTPLVVGVTMLLATLLIQYERLQGVQSSGVLIIFWFLCVVCAIVPFRSKILLAKAEGEISDPFRFTTFYIHFALVLSALILACFREKPPFFSAKNVDPNPYPETSAGFLSRLFFWWFTKMAIYGYRHPLEEKDLWSLKEEDRSQMVVQQLLEAWRKQEKQTARHKASAAPGKNASGEDEVLLGARPRPRKPSFLKALLATFGSSFLISACFKLIQDLLSFINPQLLSILIRFISNPMAPSWWGFLVAGLMFLCSMMQSLILQHYYHYIFVTGVKFRTGIMGVIYRKALVITNSVKRASTVGEIVNLMSVDAQRFMDLAPFLNLLWSAPLQIILAIYFLWQNLGPSVLAGVAFMVLLIPLNGAVAVKMRAFQVKQMKLKDSRIKLMSEILNGIKVLKLYAWEPSFLKQVEGIRQGELQLLRTAAYLHTTTTFTWMCSPFLVTLITLWVYVYVDPNNVLDAEKAFVSVSLFNILRLPLNMLPQLISNLTQASVSLKRIQQFLSQEELDPQSVERKTISPGYAITIHSGTFTWAQDLPPTLHSLDIQVPKGALVAVVGPVGCGKSSLVSALLGEMEKLEGKVHMKGSVAYVPQQAWIQNCTLQENVLFGKALNPKRYQQTLEACALLADLEMLPGGDQTEIGEKGINLSGGQRQRVSLARAVYSDADIFLLDDPLSAVDSHVAKHIFDHVIGPEGVLAGKTRVLVTHGISFLPQTDFIIVLADGQVSEMGPYPALLQRNGSFANFLCNYAPDEDQGHLEDSWTALEGAEDKEALLIEDTLSNHTDLTDNDPVTYVVQKQFMRQLSALSSDGEGQGRPVPRRHLGPSEKVQVTEAKADGALTQEEKAAIGTVELSVFWDYAKAVGLCTTLAICLLYVGQSAAAIGANVWLSAWTNDAMADSRQNNTSLRLGVYAALGILQGFLVMLAAMAMAAGGIQAARVLHQALLHNKIRSPQSFFDTTPSGRILNCFSKDIYVVDEVLAPVILMLLNSFFNAISTLVVIMASTPLFTVVILPLAVLYTLVQRFYAATSRQLKRLESVSRSPIYSHFSETVTGASVIRAYNRSRDFEIISDTKVDANQRSCYPYIISNRWLSIGVEFVGNCVVLFAALFAVIGRSSLNPGLVGLSVSYSLQVTFALNWMIRMMSDLESNIVAVERVKEYSKTETEAPWVVEGSRPPEGWPPRGEVEFRNYSVRYRPGLDLVLRDLSLHVHGGEKVGIVGRTGAGKSSMTLCLFRILEAAKGEIRIDGLNVADIGLHDLRSQLTIIPQDPILFSGTLRMNLDPFGSYSEEDIWWALELSHLHTFVSSQPAGLDFQCSEGGENLSVGQRQLVCLARALLRKSRILVLDEATAAIDLETDNLIQATIRTQFDTCTVLTIAHRLNTIMDYTRVLVLDKGVVAEFDSPANLIAARGIFYGMARDAGLA.

At 1–32 (MDALCGSGELGSKFWDSNLSVHTENPDLTPCF) the chain is on the extracellular side. An N-linked (GlcNAc...) asparagine glycan is attached at Asn18. Residues 33-53 (QNSLLAWVPCIYLWVALPCYL) form a helical membrane-spanning segment. The Cytoplasmic segment spans residues 54–73 (LYLRHHCRGYIILSHLSKLK). Residues 74-94 (MVLGVLLWCVSWADLFYSFHG) form a helical membrane-spanning segment. Over 95-99 (LVHGR) the chain is Extracellular. A helical transmembrane segment spans residues 100-120 (APAPVFFVTPLVVGVTMLLAT). The Cytoplasmic portion of the chain corresponds to 121 to 132 (LLIQYERLQGVQ). The helical transmembrane segment at 133–153 (SSGVLIIFWFLCVVCAIVPFR) threads the bilayer. Over 154 to 171 (SKILLAKAEGEISDPFRF) the chain is Extracellular. Residues 172–192 (TTFYIHFALVLSALILACFRE) form a helical membrane-spanning segment. Topologically, residues 193-302 (KPPFFSAKNV…RPRKPSFLKA (110 aa)) are cytoplasmic. Residues 303-323 (LLATFGSSFLISACFKLIQDL) traverse the membrane as a helical segment. Positions 311 to 594 (FLISACFKLI…LPQLISNLTQ (284 aa)) constitute an ABC transmembrane type-1 1 domain. The Extracellular segment spans residues 324–349 (LSFINPQLLSILIRFISNPMAPSWWG). The helical transmembrane segment at 350-370 (FLVAGLMFLCSMMQSLILQHY) threads the bilayer. The Cytoplasmic portion of the chain corresponds to 371 to 426 (YHYIFVTGVKFRTGIMGVIYRKALVITNSVKRASTVGEIVNLMSVDAQRFMDLAPF). A helical transmembrane segment spans residues 427-447 (LNLLWSAPLQIILAIYFLWQN). Over 448–450 (LGP) the chain is Extracellular. The helical transmembrane segment at 451–471 (SVLAGVAFMVLLIPLNGAVAV) threads the bilayer. At 472 to 533 (KMRAFQVKQM…LLRTAAYLHT (62 aa)) the chain is on the cytoplasmic side. Residues 534–554 (TTTFTWMCSPFLVTLITLWVY) form a helical membrane-spanning segment. Residues 555 to 576 (VYVDPNNVLDAEKAFVSVSLFN) lie on the Extracellular side of the membrane. The chain crosses the membrane as a helical span at residues 577–597 (ILRLPLNMLPQLISNLTQASV). The Cytoplasmic segment spans residues 598 to 963 (SLKRIQQFLS…VELSVFWDYA (366 aa)). An ABC transporter 1 domain is found at 629 to 851 (IHSGTFTWAQ…NGSFANFLCN (223 aa)). Residue 661 to 668 (GPVGCGKS) coordinates ATP. Phosphoserine occurs at positions 908 and 911. The interval 910–932 (LSSDGEGQGRPVPRRHLGPSEKV) is disordered. The helical transmembrane segment at 964-984 (KAVGLCTTLAICLLYVGQSAA) threads the bilayer. In terms of domain architecture, ABC transmembrane type-1 2 spans 971-1252 (TLAICLLYVG…MIRMMSDLES (282 aa)). Residues 985–1021 (AIGANVWLSAWTNDAMADSRQNNTSLRLGVYAALGIL) are Extracellular-facing. N-linked (GlcNAc...) asparagine glycans are attached at residues Asn1006 and Asn1007. The chain crosses the membrane as a helical span at residues 1022 to 1042 (QGFLVMLAAMAMAAGGIQAAR). The Cytoplasmic portion of the chain corresponds to 1043–1085 (VLHQALLHNKIRSPQSFFDTTPSGRILNCFSKDIYVVDEVLAP). The helical transmembrane segment at 1086-1106 (VILMLLNSFFNAISTLVVIMA) threads the bilayer. A topological domain (extracellular) is located at residue Ser1107. Residues 1108–1128 (TPLFTVVILPLAVLYTLVQRF) traverse the membrane as a helical segment. Residues 1129 to 1199 (YAATSRQLKR…ISNRWLSIGV (71 aa)) lie on the Cytoplasmic side of the membrane. Residues 1200–1220 (EFVGNCVVLFAALFAVIGRSS) form a helical membrane-spanning segment. At 1221-1222 (LN) the chain is on the extracellular side. The helical transmembrane segment at 1223–1243 (PGLVGLSVSYSLQVTFALNWM) threads the bilayer. Residues 1244-1527 (IRMMSDLESN…YGMARDAGLA (284 aa)) lie on the Cytoplasmic side of the membrane. The ABC transporter 2 domain occupies 1291–1523 (FRNYSVRYRP…RGIFYGMARD (233 aa)). ATP is bound at residue 1323–1330 (GRTGAGKS).

It belongs to the ABC transporter superfamily. ABCC family. Conjugate transporter (TC 3.A.1.208) subfamily. In terms of tissue distribution, mainly expressed in the liver. Also expressed in small intestine, colon, prostate, testis, brain and at a lower level in the kidney. In testis, localized to peritubular myoid cells, Leydig cells, along the basal membrane of Sertoli cells and moderately in the adluminal compartment of the seminiferous tubules.

It localises to the basolateral cell membrane. Its subcellular location is the basal cell membrane. The enzyme catalyses taurocholate(in) + ATP + H2O = taurocholate(out) + ADP + phosphate + H(+). It catalyses the reaction glycocholate(in) + ATP + H2O = glycocholate(out) + ADP + phosphate + H(+). The catalysed reaction is taurolithocholate 3-sulfate(in) + ATP + H2O = taurolithocholate 3-sulfate(out) + ADP + phosphate + H(+). It carries out the reaction taurochenodeoxycholate 3-sulfate(in) + ATP + H2O = taurochenodeoxycholate 3-sulfate(out) + ADP + phosphate + H(+). The enzyme catalyses an S-substituted glutathione(in) + ATP + H2O = an S-substituted glutathione(out) + ADP + phosphate + H(+). It catalyses the reaction ATP + H2O + xenobioticSide 1 = ADP + phosphate + xenobioticSide 2.. The catalysed reaction is 17beta-estradiol 17-O-(beta-D-glucuronate)(in) + ATP + H2O = 17beta-estradiol 17-O-(beta-D-glucuronate)(out) + ADP + phosphate + H(+). It carries out the reaction dehydroepiandrosterone 3-sulfate(in) + ATP + H2O = dehydroepiandrosterone 3-sulfate(out) + ADP + phosphate + H(+). The enzyme catalyses leukotriene C4(in) + ATP + H2O = leukotriene C4(out) + ADP + phosphate + H(+). It catalyses the reaction (4Z,15Z)-bilirubin IXalpha C8-beta-D-glucuronoside(in) + ATP + H2O = (4Z,15Z)-bilirubin IXalpha C8-beta-D-glucuronoside(out) + ADP + phosphate + H(+). The catalysed reaction is (4Z,15Z)-bilirubin IXalpha C8,C12-beta-D-bisglucuronoside(in) + ATP + H2O = (4Z,15Z)-bilirubin IXalpha C8,C12-beta-D-bisglucuronoside(out) + ADP + phosphate + H(+). ATP-dependent transporter of the ATP-binding cassette (ABC) family that binds and hydrolyzes ATP to enable active transport of various substrates including many drugs, toxicants and endogenous compound across cell membranes. Transports glucuronide conjugates such as bilirubin diglucuronide, estradiol-17-beta-o-glucuronide and GSH conjugates such as leukotriene C4 (LTC4). Transports also various bile salts (taurocholate, glycocholate, taurochenodeoxycholate-3-sulfate, taurolithocholate- 3-sulfate). Does not contribute substantially to bile salt physiology but provides an alternative route for the export of bile acids and glucuronides from cholestatic hepatocytes. May contribute to regulate the transport of organic compounds in testes across the blood-testis-barrier. Can confer resistance to various anticancer drugs, methotrexate, tenoposide and etoposide, by decreasing accumulation of these drugs in cells. This chain is ATP-binding cassette sub-family C member 3, found in Homo sapiens (Human).